Reading from the N-terminus, the 597-residue chain is K(+) efflux antiporter 6 (597 aa).

Residues 1–35 form the signal peptide; sequence MVEGRRRRRFSLSSQQLALLLLLLSFFLCFSVASP. Transmembrane regions (helical) follow at residues 177–197, 201–221, 224–244, 257–277, 287–307, 321–341, 351–371, 396–416, 440–460, 461–481, 499–519, and 543–563; these read LISD…AFAC, PVIT…LNFI, MVQV…ALGL, VAVL…GITV, GVFV…KFLM, IGIL…LPVL, MLSI…LSIL, LAAV…GLSL, IEPI…MLVN, VHFL…VIII, TALL…VLLS, and LVTT…GILL.

It belongs to the monovalent cation:proton antiporter 2 (CPA2) transporter (TC 2.A.37) family. KEA (TC 2.A.37.1) subfamily. As to expression, expressed in roots, stems, leaves, flowers and silique.

The protein resides in the golgi apparatus membrane. It localises to the golgi apparatus. Its subcellular location is the trans-Golgi network membrane. The protein localises to the prevacuolar compartment membrane. It is found in the endomembrane system. It catalyses the reaction K(+)(in) + H(+)(out) = K(+)(out) + H(+)(in). In terms of biological role, electroneutral K(+)/H(+) efflux antiporter involved in K(+) homeostasis and osmotic adjustment. Together with KEA4 and KEA5, promotes growth and development, and facilitates endosomal pH and ions homeostasis, as well as salt tolerance (e.g. K(+), NaCl and LiCl), probably by supporting cell wall biosynthesis during rapid etiolated seedling growth. The sequence is that of K(+) efflux antiporter 6 from Arabidopsis thaliana (Mouse-ear cress).